We begin with the raw amino-acid sequence, 116 residues long: Large ribosomal subunit protein bL20 (116 aa).

Belongs to the bacterial ribosomal protein bL20 family.

Binds directly to 23S ribosomal RNA and is necessary for the in vitro assembly process of the 50S ribosomal subunit. It is not involved in the protein synthesizing functions of that subunit. This Thermosynechococcus vestitus (strain NIES-2133 / IAM M-273 / BP-1) protein is Large ribosomal subunit protein bL20.